Consider the following 1369-residue polypeptide: Phospholipase D1 (1369 aa).

Disordered stretches follow at residues 27-90 and 318-340; these read YSEK…SSWH and ESHS…GRKK. Positions 31-53 are enriched in basic and acidic residues; it reads GTGRKDAEDHTPSKITDLEKNVD. The 172-residue stretch at 208 to 379 folds into the PX domain; it reads TDLIKVSVLD…NVLYSFLEFS (172 aa). PLD phosphodiesterase domains follow at residues 641-668 and 941-968; these read LFWA…CFGR and EMIY…NERS. Basic and acidic residues predominate over residues 1277–1289; that stretch reads HETHEKSENDPKN. The tract at residues 1277–1320 is disordered; it reads HETHEKSENDPKNPKAGSQGSGNTSASEDSKTEKPKTRTNNGLQ. Polar residues predominate over residues 1292–1303; that stretch reads AGSQGSGNTSAS.

The protein belongs to the phospholipase D family.

Its subcellular location is the cytoplasm. It catalyses the reaction a 1,2-diacyl-sn-glycero-3-phosphocholine + H2O = a 1,2-diacyl-sn-glycero-3-phosphate + choline + H(+). With respect to regulation, activity is slightly stimulated by oleate. Functionally, required for meiosis and spore formation. Seems to be involved in the coordinate induction of late meiotic events. This chain is Phospholipase D1 (pld1), found in Schizosaccharomyces pombe (strain 972 / ATCC 24843) (Fission yeast).